The following is a 236-amino-acid chain: Peptidase E (236 aa).

Active-site charge relay system residues include S122, D137, and H159.

It belongs to the peptidase S51 family.

It localises to the cytoplasm. It catalyses the reaction Dipeptidase E catalyzes the hydrolysis of dipeptides Asp-|-Xaa. It does not act on peptides with N-terminal Glu, Asn or Gln, nor does it cleave isoaspartyl peptides.. Functionally, hydrolyzes dipeptides containing N-terminal aspartate residues. May play a role in allowing the cell to use peptide aspartate to spare carbon otherwise required for the synthesis of the aspartate family of amino acids. The sequence is that of Peptidase E from Shewanella putrefaciens (strain CN-32 / ATCC BAA-453).